Here is a 288-residue protein sequence, read N- to C-terminus: MPVEEFVAGWISGAVGLVLGHPFDTVKVRLQTQSTYQGIVDCVVKTYRHESVLGFFKGMSFPIASVALVNSVLFGVYSNTLLALTATSHQERRAQPPSYTNIFIAGCTGGLLQAYCLAPFDLIKVRLQNQTEPRMQISSSMPRYRGPVHCAASILREEGPQGLFRGSWALVLRDTPTLGMYFVTYEGLCRQYTPEGQNPSSATVLVAGGFAGIASWITATPFDVIKSRMQMDGLKGRKYGGMLDCMASSFRQEGIGVFFKGMTLNSARAFPVNAATFLSYEYLLRLWR.

Solcar repeat units lie at residues 1 to 83, 97 to 191, and 199 to 286; these read MPVE…TLLA, PSYT…LCRQ, and PSSA…LLRL. A run of 6 helical transmembrane segments spans residues 6 to 26, 58 to 78, 102 to 122, 166 to 186, 202 to 222, and 266 to 286; these read FVAG…FDTV, GMSF…GVYS, IFIA…PFDL, GSWA…VTYE, ATVL…ATPF, and SARA…LLRL.

It belongs to the mitochondrial carrier (TC 2.A.29) family. Widely expressed, with highest levels in testis, liver and kidney and low levels in brain, including cortex, cerebellum, hippocampus and hypothalamus, and heart.

It is found in the mitochondrion inner membrane. The polypeptide is Solute carrier family 25 member 45 (Slc25a45) (Mus musculus (Mouse)).